Consider the following 122-residue polypeptide: Large ribosomal subunit protein uL18 (122 aa).

Belongs to the universal ribosomal protein uL18 family. In terms of assembly, part of the 50S ribosomal subunit; part of the 5S rRNA/L5/L18/L25 subcomplex. Contacts the 5S and 23S rRNAs.

In terms of biological role, this is one of the proteins that bind and probably mediate the attachment of the 5S RNA into the large ribosomal subunit, where it forms part of the central protuberance. The chain is Large ribosomal subunit protein uL18 from Geotalea uraniireducens (strain Rf4) (Geobacter uraniireducens).